The sequence spans 427 residues: G2/mitotic-specific cyclin-3 (427 aa).

Over residues 1–12 the composition is skewed to polar residues; the sequence is MHHNSQSLSSGH. Disordered stretches follow at residues 1–29 and 89–126; these read MHHNSQSLSSGHIRSPEDENVAPIGNLKH and SVAQRKEADHNDLLTDREQEEPVEDDGESEEDEEEDQE. Over residues 89 to 105 the composition is skewed to basic and acidic residues; it reads SVAQRKEADHNDLLTDR. Acidic residues predominate over residues 106-126; sequence EQEEPVEDDGESEEDEEEDQE.

This sequence belongs to the cyclin family. Cyclin AB subfamily.

Essential for the control of the cell cycle at the G2/M (mitosis) transition. Interacts with the CDC2 protein kinase to form MPF. G2/M cyclins accumulate steadily during G2 and are abruptly destroyed at mitosis. This Saccharomyces cerevisiae (strain ATCC 204508 / S288c) (Baker's yeast) protein is G2/mitotic-specific cyclin-3 (CLB3).